The primary structure comprises 253 residues: MEVAAPLLCLAAAVLVWGVLWVWGSWERMTRPEQAGLPGGGSRTLLVTAHPDDEAMFFAPTILGLARLRHQLFLLCFSAGNYYNQGEIRKKELLQSCDVLGIPPSNVMIIENRDFPDDPDVRWDPDRAADVLLQHVEANGIKLVVTFDEGGVSGHSNHVALNAAVRTLQAEGKLPKGCSVLTLQSVNLLRKYLCLLDLPCSLLLARDALFVLTQREAAQAQRAMSCHRSQLLWFRRLYMLFSRYMRINSLNFL.

The helical transmembrane segment at 3–23 (VAAPLLCLAAAVLVWGVLWVW) threads the bilayer. The Cytoplasmic segment spans residues 24-253 (GSWERMTRPE…YMRINSLNFL (230 aa)).

It belongs to the PIGL family.

It is found in the endoplasmic reticulum membrane. It carries out the reaction a 6-(N-acetyl-alpha-D-glucosaminyl)-1-(1,2-diacyl-sn-glycero-3-phospho)-1D-myo-inositol + H2O = a 6-(alpha-D-glucosaminyl)-1-(1,2-diacyl-sn-glycero-3-phospho)-1D-myo-inositol + acetate. It participates in glycolipid biosynthesis; glycosylphosphatidylinositol-anchor biosynthesis. Functionally, catalyzes the second step of glycosylphosphatidylinositol (GPI) biosynthesis, which is the de-N-acetylation of N-acetylglucosaminyl-phosphatidylinositol. The polypeptide is N-acetylglucosaminyl-phosphatidylinositol de-N-acetylase (PIGL) (Bos taurus (Bovine)).